A 137-amino-acid polypeptide reads, in one-letter code: Basic phospholipase A2 homolog 2 (137 aa).

The first 16 residues, 1–16 (MRTLWIMAVLLVGVEG), serve as a signal peptide directing secretion. Intrachain disulfides connect Cys-42–Cys-131, Cys-44–Cys-60, Cys-59–Cys-111, Cys-65–Cys-137, Cys-66–Cys-104, Cys-73–Cys-97, and Cys-91–Cys-102. The interval 121-133 (KKYRYYLKPLCKK) is important for membrane-damaging activities in eukaryotes and bacteria; heparin-binding.

Belongs to the phospholipase A2 family. Group II subfamily. K49 sub-subfamily. Homodimer; non-covalently linked. Binds to heparin. In terms of processing, it binds long-chain fatty acids covalently by a rapid, spontaneous, and autocatalytic process. When acylated, it binds to the surface of liposomes and isolated muscle membranes, with the fatty acid moiety inserted into the lipid bilayer and possibly acting as an anchor. As to expression, expressed by the venom gland.

The protein localises to the secreted. Its activity is regulated as follows. Heparin inhibits the myotoxic activity. Suramin inhibits the myotoxic activity. High level of membrane cholesterol content reduces cytolytic activity, whereas low level of membrane cholesterol content increases cytolytic activity. In terms of biological role, snake venom phospholipase A2 homolog that lacks enzymatic activity. Is myotoxic and induces a dose-dependent edema in the mouse foot pad. Also exhibits strong anticoagulant effects by binding to factor Xa (F10) and inhibiting the prothrombinase activity (IC(50) is 3 nM). In addition, it shows cytotoxic activity to a variety of cell types and bactericidal activity to a variety of Gram-negative and Gram-positive bacteria. Also induces a very rapid release of large amounts of potassium ions and ATP from muscle cells, which accounts for the pain reaction characteristic of viperid envenomations. The released ATP amplifies the effect of the myotoxins, acting as a 'danger signal', which spreads and causes further damage by acting on purinergic receptors. A model of myotoxic mechanism has been proposed: an apo Lys49-PLA2 is activated by the entrance of a hydrophobic molecule (e.g. fatty acid) at the hydrophobic channel of the protein leading to a reorientation of a monomer. This reorientation causes a transition between 'inactive' to 'active' states, causing alignment of C-terminal and membrane-docking sites (MDoS) side-by-side and putting the membrane-disruption sites (MDiS) in the same plane, exposed to solvent and in a symmetric position for both monomers. The MDoS region stabilizes the toxin on membrane by the interaction of charged residues with phospholipid head groups. Subsequently, the MDiS region destabilizes the membrane with penetration of hydrophobic residues. This insertion causes a disorganization of the membrane, allowing an uncontrolled influx of ions (i.e. calcium and sodium), and eventually triggering irreversible intracellular alterations and cell death. This is Basic phospholipase A2 homolog 2 from Bothrops asper (Terciopelo).